Consider the following 266-residue polypeptide: MFRQVSVRALRRAAGRSVCASRAQMVRHSSTLGGGKGSYNLDMPALALAAGVTLLAGYMVYPRAPKAKQAAVQSVAPVNENVEQASASLQASAPVQATSESAEAGEEEAYGEESGAVNEEAAGEPEEAAAEVGETQAEQAPAVETEQAAEAEQAAEAAAEDKASAGEAAQGQQGAYNPDTGEINWDCPCLGGMAHGPCGEEFKAAFACFVYSEAEPKGIDCVEKFQVMQDCFRQHPEHYAEQLESEEQAVRETEAAAESAKSDEGH.

The N-terminal 28 residues, 1-28 (MFRQVSVRALRRAAGRSVCASRAQMVRH), are a transit peptide targeting the mitochondrion. The Mitochondrial matrix segment spans residues 29–44 (SSTLGGGKGSYNLDMP). Residues 45–61 (ALALAAGVTLLAGYMVY) traverse the membrane as a helical; Signal-anchor for type II membrane protein segment. Over 62-266 (PRAPKAKQAA…AESAKSDEGH (205 aa)) the chain is Mitochondrial intermembrane. Over residues 87-98 (ASLQASAPVQAT) the composition is skewed to polar residues. Residues 87–180 (ASLQASAPVQ…GQQGAYNPDT (94 aa)) form a disordered region. Low complexity-rich tracts occupy residues 130–157 (AEVGETQAEQAPAVETEQAAEAEQAAEA) and 165–175 (AGEAAQGQQGA). Intrachain disulfides connect cysteine 187–cysteine 189, cysteine 198–cysteine 231, and cysteine 208–cysteine 221. In terms of domain architecture, CHCH spans 195 to 239 (HGPCGEEFKAAFACFVYSEAEPKGIDCVEKFQVMQDCFRQHPEHY). Short sequence motifs (cx9C motif) lie at residues 198–208 (CGEEFKAAFAC) and 221–231 (CVEKFQVMQDC). Residues 242–266 (QLESEEQAVRETEAAAESAKSDEGH) form a disordered region. Basic and acidic residues predominate over residues 248–266 (QAVRETEAAAESAKSDEGH).

In terms of assembly, monomer. Cu(2+) serves as cofactor. Zn(2+) is required as a cofactor.

The protein resides in the mitochondrion inner membrane. Its function is as follows. Required for the import and folding of small cysteine-containing proteins (small Tim) in the mitochondrial intermembrane space (IMS). Forms a redox cycle with ERV1 that involves a disulfide relay system. Precursor proteins to be imported into the IMS are translocated in their reduced form into the mitochondria. The oxidized form of MIA40 forms a transient intermolecular disulfide bridge with the reduced precursor protein, resulting in oxidation of the precursor protein that now contains an intramolecular disulfide bond and is able to undergo folding in the IMS. In Eremothecium gossypii (strain ATCC 10895 / CBS 109.51 / FGSC 9923 / NRRL Y-1056) (Yeast), this protein is Mitochondrial intermembrane space import and assembly protein 40 (MIA40).